The following is a 116-amino-acid chain: Ribonuclease P protein component (116 aa).

Belongs to the RnpA family. Consists of a catalytic RNA component (M1 or rnpB) and a protein subunit.

It carries out the reaction Endonucleolytic cleavage of RNA, removing 5'-extranucleotides from tRNA precursor.. RNaseP catalyzes the removal of the 5'-leader sequence from pre-tRNA to produce the mature 5'-terminus. It can also cleave other RNA substrates such as 4.5S RNA. The protein component plays an auxiliary but essential role in vivo by binding to the 5'-leader sequence and broadening the substrate specificity of the ribozyme. In Citrifermentans bemidjiense (strain ATCC BAA-1014 / DSM 16622 / JCM 12645 / Bem) (Geobacter bemidjiensis), this protein is Ribonuclease P protein component.